The sequence spans 98 residues: NADH-ubiquinone oxidoreductase chain 4L (98 aa).

The next 3 membrane-spanning stretches (helical) occupy residues Met1–Thr21, Val27–Ile47, and Ile61–Ile81.

The protein belongs to the complex I subunit 4L family. As to quaternary structure, core subunit of respiratory chain NADH dehydrogenase (Complex I) which is composed of 45 different subunits.

The protein resides in the mitochondrion inner membrane. It catalyses the reaction a ubiquinone + NADH + 5 H(+)(in) = a ubiquinol + NAD(+) + 4 H(+)(out). Its function is as follows. Core subunit of the mitochondrial membrane respiratory chain NADH dehydrogenase (Complex I) which catalyzes electron transfer from NADH through the respiratory chain, using ubiquinone as an electron acceptor. Part of the enzyme membrane arm which is embedded in the lipid bilayer and involved in proton translocation. This Macaca mulatta (Rhesus macaque) protein is NADH-ubiquinone oxidoreductase chain 4L (MT-ND4L).